Here is a 180-residue protein sequence, read N- to C-terminus: MTLKELVVGFGTQVRSLWMIGLHAFHKRETQMYPEEPVYLPPRYRGRIVLTRDPDGEERCVACNLCAVACPVGCISLQKAEHKDGRWYPEFFRINFSRCIFCGLCEEACPTTAIQLTPDFEMGEFKRQDLVYEKEDLLISGPGKYPEYNFYRMSGMAIDGKLKGEAENEAKPIDVKGLMP.

4Fe-4S ferredoxin-type domains lie at 50 to 80 (LTRD…LQKA) and 90 to 119 (EFFR…LTPD). Cys60, Cys63, Cys66, Cys70, Cys99, Cys102, Cys105, and Cys109 together coordinate [4Fe-4S] cluster.

The protein belongs to the complex I 23 kDa subunit family. As to quaternary structure, NDH-1 is composed of 13 different subunits. Subunits NuoA, H, J, K, L, M, N constitute the membrane sector of the complex. Requires [4Fe-4S] cluster as cofactor.

The protein resides in the cell inner membrane. The catalysed reaction is a quinone + NADH + 5 H(+)(in) = a quinol + NAD(+) + 4 H(+)(out). NDH-1 shuttles electrons from NADH, via FMN and iron-sulfur (Fe-S) centers, to quinones in the respiratory chain. The immediate electron acceptor for the enzyme in this species is believed to be ubiquinone. Couples the redox reaction to proton translocation (for every two electrons transferred, four hydrogen ions are translocated across the cytoplasmic membrane), and thus conserves the redox energy in a proton gradient. This Yersinia enterocolitica serotype O:8 / biotype 1B (strain NCTC 13174 / 8081) protein is NADH-quinone oxidoreductase subunit I.